A 725-amino-acid polypeptide reads, in one-letter code: Eukaryotic elongation factor 2 kinase (725 aa).

Residues 1-12 (MADEDLIFRLEG) are compositionally biased toward basic and acidic residues. Residues 1 to 38 (MADEDLIFRLEGVDGGQSPRAGHDGDSDGDSDDEEGYF) are disordered. Ala-2 bears the N-acetylalanine mark. Ser-18 and Ser-27 each carry phosphoserine. Residues 27–36 (SDGDSDDEEG) show a composition bias toward acidic residues. Phosphoserine; by autocatalysis is present on residues Ser-61 and Ser-66. Residues Ser-70, Ser-71, Ser-72, and Ser-74 each carry the phosphoserine modification. Ser-78 carries the phosphoserine; by autocatalysis and TRPM7 modification. Positions 81–94 (FKEAWKHAIQKAKH) are calmodulin-binding. Residues 116 to 326 (RYNAVTGEWL…ICESMGLAPF (211 aa)) enclose the Alpha-type protein kinase domain. The residue at position 243 (Ser-243) is a Phosphoserine. 296 to 302 (GDGNLGV) lines the ATP pocket. Phosphothreonine; by autocatalysis is present on residues Thr-348 and Thr-353. Disordered stretches follow at residues 352–405 (GTEE…PHSQ) and 423–477 (SRDH…SLGS). Position 359 is a phosphoserine; by MAPK13 and CDK1 (Ser-359). A compositionally biased stretch (low complexity) spans 363 to 377 (RTLSGSRPPLLRPLS). Ser-366 is subject to Phosphoserine; by autocatalysis, RPS6KA1 and RPS6KB1. Positions 386 to 404 (SDVTFDSLPSSPSSATPHS) are enriched in polar residues. Residue Ser-392 is modified to Phosphoserine. At Ser-398 the chain carries Phosphoserine; by AMPK. Composition is skewed to basic and acidic residues over residues 423-436 (SRDH…RESE) and 445-469 (SEKR…RKYE). Ser-435 bears the Phosphoserine mark. Ser-445 bears the Phosphoserine; by autocatalysis mark. Ser-470 is modified (phosphoserine). Ser-474 carries the post-translational modification Phosphoserine; by autocatalysis. Residue Ser-477 is modified to Phosphoserine. Ser-491 is modified (phosphoserine; by autocatalysis). At Ser-500 the chain carries Phosphoserine; by PKA.

Belongs to the protein kinase superfamily. Alpha-type protein kinase family. Monomer or homodimer. Interacts with Calmodulin/CALM1; this interaction is strictly required for phosphorylation activity. Post-translationally, autophosphorylated at multiple residues, Thr-348 being the major site. Phosphorylated by AMP-activated protein kinase AMPK at Ser-398 leading to EEF2K activation and protein synthesis inhibition. Phosphorylated by TRPM7 at Ser-78 resulting in improved protein stability, higher EE2F phosphorylated and subsequently reduced rate of protein synthesis. Phosphorylation by other kinases such as CDK1 and MAPK13 at Ser-359 or RPS6KA1 and RPS6KB1 at Ser-366 instead decrease EEF2K activity and promote protein synthesis.

It carries out the reaction [translation elongation factor 2] + ATP = [translation elongation factor 2]-phosphate + ADP + H(+). Undergoes calcium/calmodulin-dependent intramolecular autophosphorylation, and this results in it becoming partially calcium/calmodulin-independent. Its function is as follows. Threonine kinase that regulates protein synthesis by controlling the rate of peptide chain elongation. Upon activation by a variety of upstream kinases including AMPK or TRPM7, phosphorylates the elongation factor EEF2 at a single site, renders it unable to bind ribosomes and thus inactive. In turn, the rate of protein synthesis is reduced. This is Eukaryotic elongation factor 2 kinase (EEF2K) from Homo sapiens (Human).